A 174-amino-acid chain; its full sequence is Crossover junction endodeoxyribonuclease RuvC (174 aa).

Active-site residues include aspartate 8, glutamate 67, and aspartate 139. Residues aspartate 8, glutamate 67, and aspartate 139 each coordinate Mg(2+).

It belongs to the RuvC family. In terms of assembly, homodimer which binds Holliday junction (HJ) DNA. The HJ becomes 2-fold symmetrical on binding to RuvC with unstacked arms; it has a different conformation from HJ DNA in complex with RuvA. In the full resolvosome a probable DNA-RuvA(4)-RuvB(12)-RuvC(2) complex forms which resolves the HJ. Mg(2+) is required as a cofactor.

It localises to the cytoplasm. It carries out the reaction Endonucleolytic cleavage at a junction such as a reciprocal single-stranded crossover between two homologous DNA duplexes (Holliday junction).. The RuvA-RuvB-RuvC complex processes Holliday junction (HJ) DNA during genetic recombination and DNA repair. Endonuclease that resolves HJ intermediates. Cleaves cruciform DNA by making single-stranded nicks across the HJ at symmetrical positions within the homologous arms, yielding a 5'-phosphate and a 3'-hydroxyl group; requires a central core of homology in the junction. The consensus cleavage sequence is 5'-(A/T)TT(C/G)-3'. Cleavage occurs on the 3'-side of the TT dinucleotide at the point of strand exchange. HJ branch migration catalyzed by RuvA-RuvB allows RuvC to scan DNA until it finds its consensus sequence, where it cleaves and resolves the cruciform DNA. This is Crossover junction endodeoxyribonuclease RuvC from Pseudomonas putida (strain W619).